The sequence spans 485 residues: Ribulose bisphosphate carboxylase large chain (485 aa).

Positions 124 and 174 each coordinate substrate. Catalysis depends on lysine 176, which acts as the Proton acceptor. Position 178 (lysine 178) interacts with substrate. Mg(2+)-binding residues include lysine 202, aspartate 204, and glutamate 205. An N6-carboxylysine modification is found at lysine 202. Histidine 294 (proton acceptor) is an active-site residue. 3 residues coordinate substrate: arginine 295, histidine 327, and serine 379.

Belongs to the RuBisCO large chain family. Type I subfamily. Heterohexadecamer of 8 large chains and 8 small chains. Mg(2+) is required as a cofactor.

It carries out the reaction 2 (2R)-3-phosphoglycerate + 2 H(+) = D-ribulose 1,5-bisphosphate + CO2 + H2O. It catalyses the reaction D-ribulose 1,5-bisphosphate + O2 = 2-phosphoglycolate + (2R)-3-phosphoglycerate + 2 H(+). RuBisCO catalyzes two reactions: the carboxylation of D-ribulose 1,5-bisphosphate, the primary event in carbon dioxide fixation, as well as the oxidative fragmentation of the pentose substrate. Both reactions occur simultaneously and in competition at the same active site. In Rhodopseudomonas palustris (strain HaA2), this protein is Ribulose bisphosphate carboxylase large chain.